The chain runs to 285 residues: Small ribosomal subunit biogenesis GTPase RsgA (285 aa).

Residues 61–215 (KNQLIRPKVA…IIDSPGFSSF (155 aa)) form the CP-type G domain. GTP-binding positions include 110 to 113 (TKID) and 159 to 167 (GQTGVGKTS). Positions 239, 244, 246, and 254 each coordinate Zn(2+).

This sequence belongs to the TRAFAC class YlqF/YawG GTPase family. RsgA subfamily. In terms of assembly, monomer. Associates with 30S ribosomal subunit, binds 16S rRNA. Zn(2+) serves as cofactor.

The protein localises to the cytoplasm. One of several proteins that assist in the late maturation steps of the functional core of the 30S ribosomal subunit. Helps release RbfA from mature subunits. May play a role in the assembly of ribosomal proteins into the subunit. Circularly permuted GTPase that catalyzes slow GTP hydrolysis, GTPase activity is stimulated by the 30S ribosomal subunit. This is Small ribosomal subunit biogenesis GTPase RsgA from Mesomycoplasma hyopneumoniae (strain 7448) (Mycoplasma hyopneumoniae).